Consider the following 125-residue polypeptide: uncharacterized protein (125 aa).

This sequence belongs to the asfivirus B125R family.

This is an uncharacterized protein from African swine fever virus (isolate Pig/Kenya/KEN-50/1950) (ASFV).